A 66-amino-acid polypeptide reads, in one-letter code: MSLKWTDVLEIAIQLDESKPEVDPRYVNFVDLRRWVVELPEFSDDPQRSGEKVLEAIQAAWIEERD.

This sequence to E.coli YfhJ.

This is an uncharacterized protein from Pseudomonas aeruginosa (strain ATCC 15692 / DSM 22644 / CIP 104116 / JCM 14847 / LMG 12228 / 1C / PRS 101 / PAO1).